The primary structure comprises 442 residues: MALMVVGLSHRTASLEVLERAAFDARGAEEVLRALTASPHVEEAFVLSTCNRVELYCDVSRFHGGVADIGDVLCRRIGRGLDELGDQLYVHYEDAGVEHLFKVACGLDSMAVGESQILGQLRLALRGLHERGLAGGTLDRLLQTALRVGKRAHSETRLDAAGASLVDTAMTRAAGVVGELPGRRALVVGAGAMSALVATTLARAGLDVVVANRTPDRAQRLAAAVGGRATGLDDLRAEVAAADLVVSCTGAVGHVLDVATVASALLDRPERPLFLADLALPRDVHPDVATLRGAHLVDLEGLGADLASSAVAQDLRAVRAIVAEEVAAHAASLRAADVAPTVVALRAQARHVVEVEMRRLASRVDLDDTTRSEVDRAVHRIVEKLLHTPTVRVKELAEAPGGVGYAAALRALFDLEVTAQGGALPGDAPLSGTVADAVGHVS.

Substrate contacts are provided by residues 49 to 52 (TCNR), serine 109, 114 to 116 (ESQ), and glutamine 120. Residue cysteine 50 is the Nucleophile of the active site. 189-194 (GAGAMS) lines the NADP(+) pocket.

Belongs to the glutamyl-tRNA reductase family. In terms of assembly, homodimer.

It carries out the reaction (S)-4-amino-5-oxopentanoate + tRNA(Glu) + NADP(+) = L-glutamyl-tRNA(Glu) + NADPH + H(+). It participates in porphyrin-containing compound metabolism; protoporphyrin-IX biosynthesis; 5-aminolevulinate from L-glutamyl-tRNA(Glu): step 1/2. Its function is as follows. Catalyzes the NADPH-dependent reduction of glutamyl-tRNA(Glu) to glutamate 1-semialdehyde (GSA). The protein is Glutamyl-tRNA reductase of Kineococcus radiotolerans (strain ATCC BAA-149 / DSM 14245 / SRS30216).